The sequence spans 558 residues: Polypeptide N-acetylgalactosaminyltransferase 16 (558 aa).

The Cytoplasmic segment spans residues 1–6 (MRKIRA). Residues 7 to 26 (NAIAILTVAWILGTFYYLWQ) form a helical; Signal-anchor for type II membrane protein membrane-spanning segment. At 27–558 (DNRAHAASSS…AQQWQLLPHT (532 aa)) the chain is on the lumenal side. A compositionally biased stretch (low complexity) spans 34–46 (SSSGRGAQRAGGR). The segment at 34 to 53 (SSSGRGAQRAGGRPEQLRED) is disordered. 5 cysteine pairs are disulfide-bonded: Cys113-Cys340, Cys331-Cys409, Cys441-Cys460, Cys486-Cys506, and Cys530-Cys543. The interval 122–227 (LPATSVIITF…VEWLQPMLQR (106 aa)) is catalytic subdomain A. Asp163 and Arg188 together coordinate substrate. Asp211 lines the Mn(2+) pocket. A substrate-binding site is contributed by Ser212. Residue His213 participates in Mn(2+) binding. The catalytic subdomain B stretch occupies residues 286–348 (PIRTPVIAGG…PCSRVGHVFR (63 aa)). Trp317 serves as a coordination point for substrate. His345 provides a ligand contact to Mn(2+). 3 residues coordinate substrate: Arg348, His351, and Tyr353. In terms of domain architecture, Ricin B-type lectin spans 428-555 (KEVLPGVIKQ…DAQAQQWQLL (128 aa)).

This sequence belongs to the glycosyltransferase 2 family. GalNAc-T subfamily. Mn(2+) is required as a cofactor. In terms of tissue distribution, in the CNS, it is predominantly expressed in several distinct hypothalamic, thalamic and amygdaloid nuclei. The most abundant level of expression is in the paraventricular, ventromedial and arcuate nuclei of the hypothalamus, the anterodorsal and parafascicular nuclei of the thalamus and the central, basomedial and medial nuclei of the amygdala. Also expressed in cerebral cortex, lateral septum, habenula and hippocampus.

The protein resides in the golgi apparatus membrane. It catalyses the reaction L-seryl-[protein] + UDP-N-acetyl-alpha-D-galactosamine = a 3-O-[N-acetyl-alpha-D-galactosaminyl]-L-seryl-[protein] + UDP + H(+). The enzyme catalyses L-threonyl-[protein] + UDP-N-acetyl-alpha-D-galactosamine = a 3-O-[N-acetyl-alpha-D-galactosaminyl]-L-threonyl-[protein] + UDP + H(+). Its pathway is protein modification; protein glycosylation. Functionally, catalyzes the initial reaction in O-linked oligosaccharide biosynthesis, the transfer of an N-acetyl-D-galactosamine residue to a serine or threonine residue on the protein receptor. The protein is Polypeptide N-acetylgalactosaminyltransferase 16 (Galnt16) of Mus musculus (Mouse).